The following is a 745-amino-acid chain: uncharacterized protein (745 aa).

Positions 158–256 (NQVCDYIELH…HQTPKQYRGD (99 aa)) constitute an HTH araC/xylS-type domain. 2 DNA-binding regions (H-T-H motif) span residues 175–196 (SELS…AESL) and 223–246 (ITDI…KHIT).

This is an uncharacterized protein from Staphylococcus aureus.